The primary structure comprises 344 residues: Probable pectinesterase 67 (344 aa).

The N-terminal stretch at 1–23 (MGHRTRMILVLTLVVMSIWGSDA) is a signal peptide. 2 N-linked (GlcNAc...) asparagine glycosylation sites follow: Asn43 and Asn151. Gln152 contacts substrate. Asp196 functions as the Nucleophile in the catalytic mechanism. Residue Arg256 coordinates substrate. N-linked (GlcNAc...) asparagine glycosylation occurs at Asn282.

The protein belongs to the pectinesterase family. In terms of tissue distribution, expressed in flower buds.

The protein localises to the secreted. The protein resides in the cell wall. The catalysed reaction is [(1-&gt;4)-alpha-D-galacturonosyl methyl ester](n) + n H2O = [(1-&gt;4)-alpha-D-galacturonosyl](n) + n methanol + n H(+). The protein operates within glycan metabolism; pectin degradation; 2-dehydro-3-deoxy-D-gluconate from pectin: step 1/5. Functionally, acts in the modification of cell walls via demethylesterification of cell wall pectin. The sequence is that of Probable pectinesterase 67 (PME67) from Arabidopsis thaliana (Mouse-ear cress).